We begin with the raw amino-acid sequence, 351 residues long: UPF0252 protein MJECL39 (351 aa).

2 helical membrane-spanning segments follow: residues 58 to 78 and 91 to 111; these read FITFFIIVGLVWAIFPEVWLW and IIICCLYFIITIILFLFLCGV.

The protein belongs to the UPF0252 family.

Its subcellular location is the cell membrane. This Methanocaldococcus jannaschii (strain ATCC 43067 / DSM 2661 / JAL-1 / JCM 10045 / NBRC 100440) (Methanococcus jannaschii) protein is UPF0252 protein MJECL39.